A 383-amino-acid polypeptide reads, in one-letter code: GTP-binding protein 10 homolog (383 aa).

Residues 22 to 157 enclose the Obg domain; the sequence is PSFLDTLRLA…RIVNLDLKLI (136 aa). One can recognise an OBG-type G domain in the interval 158–353; that stretch reads ADVGLVGFPN…VKSQLRRTLV (196 aa). Residues 164 to 171, 211 to 215, and 287 to 290 contribute to the GTP site; these read GFPNAGKS, DLPGL, and NKMD.

The protein belongs to the TRAFAC class OBG-HflX-like GTPase superfamily. OBG GTPase family.

It is found in the nucleus. The protein resides in the nucleolus. Functionally, may be involved in the ribosome maturation process. This is GTP-binding protein 10 homolog from Drosophila pseudoobscura pseudoobscura (Fruit fly).